A 171-amino-acid chain; its full sequence is Adenine phosphoribosyltransferase (171 aa).

It belongs to the purine/pyrimidine phosphoribosyltransferase family. As to quaternary structure, homodimer.

It localises to the cytoplasm. The catalysed reaction is AMP + diphosphate = 5-phospho-alpha-D-ribose 1-diphosphate + adenine. Its pathway is purine metabolism; AMP biosynthesis via salvage pathway; AMP from adenine: step 1/1. Functionally, catalyzes a salvage reaction resulting in the formation of AMP, that is energically less costly than de novo synthesis. The chain is Adenine phosphoribosyltransferase from Rhodospirillum rubrum (strain ATCC 11170 / ATH 1.1.1 / DSM 467 / LMG 4362 / NCIMB 8255 / S1).